Consider the following 102-residue polypeptide: Small ribosomal subunit protein uS10 (102 aa).

This sequence belongs to the universal ribosomal protein uS10 family. Part of the 30S ribosomal subunit.

Involved in the binding of tRNA to the ribosomes. This chain is Small ribosomal subunit protein uS10, found in Bacillus anthracis (strain A0248).